The primary structure comprises 524 residues: Fusicoccadiene C-8 hydroxylase (524 aa).

Residues 16–36 form a helical membrane-spanning segment; that stretch reads LQLLCIGPLVYACVSFIIKIV. N-linked (GlcNAc...) asparagine glycans are attached at residues N126 and N344. C465 serves as a coordination point for heme. N-linked (GlcNAc...) asparagine glycosylation occurs at N496.

The protein belongs to the cytochrome P450 family. Requires heme as cofactor.

It is found in the membrane. The protein operates within mycotoxin biosynthesis. Functionally, cytochrome P450 monooxygenase; part of the 2 gene clusters that mediate the biosynthesis of fusicoccins, diterpene glucosides that display phytohormone-like activity and function as potent activators of plasma membrane H(+)-ATPases in plants by modifying 14-3-3 proteins and cause the plant disease constriction canker. The first step in the pathway is performed by the fusicoccadiene synthase PaFS that possesses both prenyl transferase and terpene cyclase activity, converting isopentenyl diphosphate and dimethylallyl diphosphate into geranylgeranyl diphosphate (GGDP) and successively converting GGDP into fusicocca-2,10(14)-diene, a precursor for fusicoccin H. The second step is the oxidation at the C-8 position by the cytochrome P450 monooxygenase PaP450-2 to yield fusicocca-2,10(14)-diene-8-beta-ol. The cytochrome P450 monooxygenase PaP450-1 then catalyzes the hydroxylation at the C-16 position to produce fusicocca-2,10(14)-diene-8-beta,16-diol. The dioxygenase fc-dox then catalyzes the 16-oxydation of fusicocca-2,10(14)-diene-8-beta,16-diol to yield an aldehyde (8-beta-hydroxyfusicocca-1,10(14)-dien-16-al). The short-chain dehydrogenase/reductase fc-sdr catalyzes the reduction of the aldehyde to yield fusicocca-1,10(14)-diene-8-beta,16-diol. The next step is the hydroxylation at C-9 performed by the cytochrome P450 monooxygenase PaP450-3 that leads to fusicoccin H aglycon which is glycosylated to fusicoccin H by the O-glycosyltransferase PaGT. Hydroxylation at C-12 by the cytochrome P450 monooxygenase PaP450-4 leads then to the production of fusicoccin Q and is followed by methylation by the O-methyltransferase PaMT to yield fusicoccin P. Fusicoccin P is further converted to fusicoccin J via prenylation by the O-glucose prenyltransferase PaPT. Cytochrome P450 monooxygenase PaP450-5 then performs hydroxylation at C-19 to yield dideacetyl-fusicoccin A which is acetylated to 3'-O-deacetyl-fusicoccin A by the O-acetyltransferase PaAT-2. Finally, a another acetylation by the O-acetyltransferase PaAT-1 yields fusicoccin A. This is Fusicoccadiene C-8 hydroxylase from Phomopsis amygdali (Fusicoccum amygdali).